The primary structure comprises 356 residues: Holliday junction branch migration complex subunit RuvB (356 aa).

The interval 13–197 is large ATPase domain (RuvB-L); it reads LPPARRMLSA…FGIVARLEFY (185 aa). Residues L36, R37, G78, K81, T82, T83, 144-146, R187, Y197, and R234 contribute to the ATP site; that span reads EDY. Residue T82 coordinates Mg(2+). Residues 198-268 are small ATPAse domain (RuvB-S); sequence TPEELARIVK…IANRALAMLD (71 aa). Residues 271–356 are head domain (RuvB-H); it reads PQGFDLMDRK…RGNAENLFEE (86 aa). DNA is bound by residues R326 and R331.

The protein belongs to the RuvB family. As to quaternary structure, homohexamer. Forms an RuvA(8)-RuvB(12)-Holliday junction (HJ) complex. HJ DNA is sandwiched between 2 RuvA tetramers; dsDNA enters through RuvA and exits via RuvB. An RuvB hexamer assembles on each DNA strand where it exits the tetramer. Each RuvB hexamer is contacted by two RuvA subunits (via domain III) on 2 adjacent RuvB subunits; this complex drives branch migration. In the full resolvosome a probable DNA-RuvA(4)-RuvB(12)-RuvC(2) complex forms which resolves the HJ.

The protein localises to the cytoplasm. It catalyses the reaction ATP + H2O = ADP + phosphate + H(+). Functionally, the RuvA-RuvB-RuvC complex processes Holliday junction (HJ) DNA during genetic recombination and DNA repair, while the RuvA-RuvB complex plays an important role in the rescue of blocked DNA replication forks via replication fork reversal (RFR). RuvA specifically binds to HJ cruciform DNA, conferring on it an open structure. The RuvB hexamer acts as an ATP-dependent pump, pulling dsDNA into and through the RuvAB complex. RuvB forms 2 homohexamers on either side of HJ DNA bound by 1 or 2 RuvA tetramers; 4 subunits per hexamer contact DNA at a time. Coordinated motions by a converter formed by DNA-disengaged RuvB subunits stimulates ATP hydrolysis and nucleotide exchange. Immobilization of the converter enables RuvB to convert the ATP-contained energy into a lever motion, pulling 2 nucleotides of DNA out of the RuvA tetramer per ATP hydrolyzed, thus driving DNA branch migration. The RuvB motors rotate together with the DNA substrate, which together with the progressing nucleotide cycle form the mechanistic basis for DNA recombination by continuous HJ branch migration. Branch migration allows RuvC to scan DNA until it finds its consensus sequence, where it cleaves and resolves cruciform DNA. In Polaromonas naphthalenivorans (strain CJ2), this protein is Holliday junction branch migration complex subunit RuvB.